The following is a 203-amino-acid chain: Urease accessory protein UreG (203 aa).

A GTP-binding site is contributed by 14 to 21; sequence GPVGSGKT.

The protein belongs to the SIMIBI class G3E GTPase family. UreG subfamily. Homodimer. UreD, UreF and UreG form a complex that acts as a GTP-hydrolysis-dependent molecular chaperone, activating the urease apoprotein by helping to assemble the nickel containing metallocenter of UreC. The UreE protein probably delivers the nickel.

It localises to the cytoplasm. Facilitates the functional incorporation of the urease nickel metallocenter. This process requires GTP hydrolysis, probably effectuated by UreG. This chain is Urease accessory protein UreG, found in Rhizobium etli (strain ATCC 51251 / DSM 11541 / JCM 21823 / NBRC 15573 / CFN 42).